We begin with the raw amino-acid sequence, 743 residues long: Serine-rich coiled-coil domain-containing protein 1 (743 aa).

Disordered stretches follow at residues 1–125 and 156–175; these read MGDS…SRNK and KSEG…SVKQ. Residues 29–56 show a composition bias toward low complexity; sequence LPSSPSSSNTVGVHSSSPSSTNSSSGST. A compositionally biased stretch (polar residues) spans 81-102; sequence EPTNQNLSISNGAQPGQSSMQK. Residues 672–713 are a coiled coil; sequence MKDECSMLKLQLKEKDELISQLQEELEKVQHLQKAFASRVDK.

The protein belongs to the CCSER family.

The protein is Serine-rich coiled-coil domain-containing protein 1 (CCSER1) of Bos taurus (Bovine).